A 1785-amino-acid polypeptide reads, in one-letter code: Mellein synthase (1785 aa).

Residues 1–36 form a disordered region; sequence MATPDDPATPALSLSASNSSSPTAASSVPPPTGTSE. The segment covering 8-27 has biased composition (low complexity); it reads ATPALSLSASNSSSPTAASS. The 426-residue stretch at 39–464 folds into the Ketosynthase family 3 (KS3) domain; sequence YDDVAIIGMS…GTVSHAIIEQ (426 aa). Catalysis depends on for beta-ketoacyl synthase activity residues cysteine 211, histidine 346, and histidine 386. A malonyl-CoA:ACP transacylase (MAT) domain region spans residues 575 to 888; sequence VWVFSGHGSH…AVAQLWTKGV (314 aa). Serine 661 (for malonyltransferase activity) is an active-site residue. Residues 933–1047 form an N-terminal hotdog fold region; that stretch reads NNMLGQRMVV…ASWENEPSAN (115 aa). Residues 933–1206 form the PKS/mFAS DH domain; the sequence is NNMLGQRMVV…FTEVEATPTK (274 aa). Residues 935 to 1203 are dehydratase (DH) domain; that stretch reads MLGQRMVVAG…SIRFTEVEAT (269 aa). Catalysis depends on histidine 965, which acts as the Proton acceptor; for dehydratase activity. The interval 1062 to 1206 is C-terminal hotdog fold; sequence GTRVSETFSV…FTEVEATPTK (145 aa). Catalysis depends on aspartate 1123, which acts as the Proton donor; for dehydratase activity. The interval 1418-1608 is ketoreductase (KR) domain; the sequence is GTYVLTGGLG…AIAFQWTAWR (191 aa). The segment covering 1681–1698 has biased composition (polar residues); that stretch reads QDQSAPASGNASDSSGRP. The segment at 1681-1701 is disordered; it reads QDQSAPASGNASDSSGRPTAS. One can recognise a Carrier domain in the interval 1706–1781; it reads PWLDVKIREC…AMVGWFQKQF (76 aa). Serine 1741 carries the post-translational modification O-(pantetheine 4'-phosphoryl)serine.

It participates in secondary metabolite biosynthesis. In terms of biological role, polyketide synthase that produces (R)-mellein, a secondary metabolite that inhibits the germination of wheat (Triticum aestivum) and barrel medic (Medicago truncatula) seeds. Condensates 1 acetate starter unit and 4 extender malonate units. The nascent pentaketide intermediate then undergoes an aldol cyclization and is aromatized via dehydration. The (R)-O-methylmellein isolated from P.nodorum is most likely to be derived from (R)-mellein via an additional methylation at the hydroxyl group. Interestingly, no O-methyltransferase gene is encoded in the vicinity of MLNS on the chromosome. Thus, the O-methylation is likely to be catalyzed by an endogenous O-methyltransferase encoded elsewhere in the genome of P.nodorum. This Phaeosphaeria nodorum (strain SN15 / ATCC MYA-4574 / FGSC 10173) (Glume blotch fungus) protein is Mellein synthase.